Here is an 80-residue protein sequence, read N- to C-terminus: Serine palmitoyltransferase small subunit B (80 aa).

At Met-1–Ser-11 the chain is on the cytoplasmic side. A helical transmembrane segment spans residues Trp-12–Trp-29. Residues Glu-30 to Thr-36 lie on the Lumenal side of the membrane. A helical transmembrane segment spans residues Leu-37 to Val-57. Over Arg-58–Ser-80 the chain is Cytoplasmic.

It belongs to the SPTSS family. SPTSSB subfamily. Component of the serine palmitoyltransferase (SPT) complex, which is composed of SPTLC1, SPTLC2 or SPTLC3 and SPTSSA or SPTSSB. The heterodimer consisting of SPTLC1 and SPTLC2/SPTLC3 forms the catalytic core of the enzyme, while SPTSSA or SPTSSB subunits determine substrate specificity. SPT also interacts with ORMDL proteins, especially ORMDL3, which negatively regulate SPT activity in the presence of ceramides.

It is found in the endoplasmic reticulum membrane. It participates in lipid metabolism; sphingolipid metabolism. Functionally, component of the serine palmitoyltransferase multisubunit enzyme (SPT) that catalyzes the initial and rate-limiting step in sphingolipid biosynthesis by condensing L-serine and activated acyl-CoA (most commonly palmitoyl-CoA) to form long-chain bases. The SPT complex is composed of SPTLC1, SPTLC2 or SPTLC3 and SPTSSA or SPTSSB. Within this complex, the heterodimer consisting of SPTLC1 and SPTLC2/SPTLC3 forms the catalytic core. Within the SPT complex, SPTSSB stimulates the catalytic activity and plays a role in substrate specificity. SPT complexes with this subunit showing a preference for longer acyl-CoAs. The SPTLC1-SPTLC2-SPTSSB complex shows a strong preference for C18-CoA substrate, while the SPTLC1-SPTLC3-SPTSSB isozyme displays an ability to use a broader range of acyl-CoAs, without apparent preference. This chain is Serine palmitoyltransferase small subunit B (sptssb), found in Xenopus tropicalis (Western clawed frog).